We begin with the raw amino-acid sequence, 143 residues long: Transcriptional regulator MraZ (143 aa).

SpoVT-AbrB domains follow at residues 5–47 (QYEH…SLDE) and 76–119 (AVEC…SKEV).

Belongs to the MraZ family. Forms oligomers.

It is found in the cytoplasm. The protein localises to the nucleoid. This Caldanaerobacter subterraneus subsp. tengcongensis (strain DSM 15242 / JCM 11007 / NBRC 100824 / MB4) (Thermoanaerobacter tengcongensis) protein is Transcriptional regulator MraZ.